The following is a 366-amino-acid chain: Polyprenyl transferase ausN (366 aa).

Helical transmembrane passes span 97–117 (VVGIAYSAATAPTKLPLDLLL), 121–141 (LLLTLWSFILRSAGCAWNDLI), 164–184 (LPTATIFTACLFALGCSLFLF), 215–235 (LILVNIAWAIPMAMHSLGVEP), 239–259 (ILSSICLCVFIATVIVLIDLV), 287–307 (LAYSLFAISTLALLFGGLLGG), 308–328 (LRAPFVVFSVGGHIVGFWTFL), and 346–366 (SCLMASIFWLLGLGIEYAVRV).

It belongs to the UbiA prenyltransferase family. Mg(2+) is required as a cofactor.

It is found in the membrane. It catalyses the reaction 3,5-dimethylorsellinate + (2E,6E)-farnesyl diphosphate = (3R)-3-farnesyl-6-hydroxy-2,3,5-trimethyl-4-oxocyclohexa-1,5-diene-1-carboxylate + diphosphate + H(+). It participates in secondary metabolite biosynthesis; terpenoid biosynthesis. Its function is as follows. Polyprenyl transferase; part of the gene cluster that mediates the biosynthesis of calidodehydroaustin, a fungal meroterpenoid. The first step of the pathway is the synthesis of 3,5-dimethylorsellinic acid by the polyketide synthase ausA. 3,5-dimethylorsellinic acid is then prenylated by the polyprenyl transferase ausN. Further epoxidation by the FAD-dependent monooxygenase ausM and cyclization by the probable terpene cyclase ausL lead to the formation of protoaustinoid A. Protoaustinoid A is then oxidized to spiro-lactone preaustinoid A3 by the combined action of the FAD-binding monooxygenases ausB and ausC, and the dioxygenase ausE. Acid-catalyzed keto-rearrangement and ring contraction of the tetraketide portion of preaustinoid A3 by ausJ lead to the formation of preaustinoid A4. The aldo-keto reductase ausK, with the help of ausH, is involved in the next step by transforming preaustinoid A4 into isoaustinone which is in turn hydroxylated by the P450 monooxygenase ausI to form austinolide. The cytochrome P450 monooxygenase ausG modifies austinolide to austinol. Austinol is further acetylated to austin by the O-acetyltransferase ausP, which spontaneously changes to dehydroaustin. The cytochrome P450 monooxygenase ausR then converts dehydroaustin is into 7-dehydrodehydroaustin. The hydroxylation catalyzed by ausR permits the O-acetyltransferase ausQ to add an additional acetyl group to the molecule, leading to the formation of acetoxydehydroaustin. The short chain dehydrogenase ausT catalyzes the reduction of the double bond present between carbon atoms 1 and 2 to convert 7-dehydrodehydroaustin into 1,2-dihydro-7-hydroxydehydroaustin. AusQ catalyzes not only an acetylation reaction but also the addition of the PKS ausV diketide product to 1,2-dihydro-7-hydroxydehydroaustin, forming precalidodehydroaustin. Finally, the iron/alpha-ketoglutarate-dependent dioxygenase converts precalidodehydroaustin into calidodehydroaustin. In Aspergillus calidoustus, this protein is Polyprenyl transferase ausN.